The primary structure comprises 115 residues: U3-lycotoxin-Ls1h (115 aa).

An N-terminal signal peptide occupies residues 1–20; sequence MKFVLLFGVFLVTLFSYSSA. The propeptide occupies 21-44; the sequence is EMLDDFDQADEDELLSLIEKEEAR. 4 cysteine pairs are disulfide-bonded: C48–C63, C55–C72, C62–C87, and C74–C85.

It belongs to the neurotoxin 19 (CSTX) family. 01 subfamily. As to expression, expressed by the venom gland.

The protein localises to the secreted. This chain is U3-lycotoxin-Ls1h, found in Lycosa singoriensis (Wolf spider).